The chain runs to 1042 residues: Aldehyde reductase lnaA (1042 aa).

Residues 29–425 are adenylation (A) domain; it reads HAFLNPSAMA…GRRDHQVKVR (397 aa). Residues 532-609 enclose the Carrier domain; the sequence is DNEDSTRGKL…RLAGILEERI (78 aa). Ser-569 bears the O-(pantetheine 4'-phosphoryl)serine mark. The tract at residues 655 to 897 is short-chain dehydrogenase/reductase (R) domain; that stretch reads LTGATGFVGS…FVPVDYVNAV (243 aa).

The protein belongs to the NRP synthetase family.

It carries out the reaction L-tyrosinal + AMP + diphosphate + NADP(+) = L-tyrosine + ATP + NADPH + H(+). It participates in secondary metabolite biosynthesis. In terms of biological role, non-canonical nonribosomal peptide synthetase; part of the lna gene cluster that mediates the biosynthesis of diastereomeric piperazines. Lna and lnb clusters encode sets of enzymes that produce overlapping sets of previously undescribed metabolites such as piperazinomycin-like metabolites or morpholine. The lna and lnb biosynthetic pathways appear to be part of a signaling network that controls the formation of sclerotia, a resilient overwintering structure. One primary function of the non-canonical nonribosomal peptide synthetases lnaA and lnbA consists in the reduction of L-tyrosine. The presence in the clusters of tailoring enzymes such as the oxidoreductases lnaB, lnbB, lnaE or lnbE, as well as of the cytochrome P450 monooxygenases lnaC, lnaD, or lnbC, might explain formation of various diastereomeric piperazines. This is Aldehyde reductase lnaA from Aspergillus flavus (strain ATCC 200026 / FGSC A1120 / IAM 13836 / NRRL 3357 / JCM 12722 / SRRC 167).